Reading from the N-terminus, the 203-residue chain is Kunitz trypsin inhibitor 6 (203 aa).

Residues 1-21 (MKTFQLMMISFLFVAITTTSG) form the signal peptide. Cysteine 70 and cysteine 115 are disulfide-bonded. N-linked (GlcNAc...) asparagine glycosylation is found at asparagine 94, asparagine 127, asparagine 136, asparagine 144, and asparagine 197.

It belongs to the protease inhibitor I3 (leguminous Kunitz-type inhibitor) family.

Its function is as follows. Exhibits Kunitz trypsin protease inhibitor activity. This is Kunitz trypsin inhibitor 6 from Arabidopsis thaliana (Mouse-ear cress).